A 524-amino-acid polypeptide reads, in one-letter code: Cytochrome P450 4F3 (524 aa).

A helical transmembrane segment spans residues Trp-19–Tyr-39. Cys-468 serves as a coordination point for heme.

It belongs to the cytochrome P450 family. Heme is required as a cofactor. As to expression, highest level in polymorphonuclear leukocytes and dendritic cells. Detectable in lymph nodes, spleen, bone marrow and peripheral blood. Highly expressed in ovary. Very low level in liver, kidney, and smooth muscle. Expressed in neutrophils (at protein level).

The protein localises to the endoplasmic reticulum membrane. It localises to the microsome membrane. The catalysed reaction is leukotriene B4 + reduced [NADPH--hemoprotein reductase] + O2 = 18-hydroxy-leukotriene B4 + oxidized [NADPH--hemoprotein reductase] + H2O + H(+). It catalyses the reaction leukotriene B4 + reduced [NADPH--hemoprotein reductase] + O2 = 19-hydroxy-leukotriene B4 + oxidized [NADPH--hemoprotein reductase] + H2O + H(+). Its pathway is lipid metabolism; leukotriene B4 degradation. Functionally, a cytochrome P450 monooxygenase involved in the metabolism of the pro-inflammatory lipid mediator leukotriene B4 (LTB4). Hydroxylates at the omega-1 and omega-2 positions LTB4. This oxidation step leads to LTB4 inactivation, which is postulated to be a crucial part of the resolution of inflammation. Mechanistically, uses molecular oxygen inserting one oxygen atom into a substrate, and reducing the second into a water molecule, with two electrons provided by NADPH via cytochrome P450 reductase (CPR; NADPH-ferrihemoprotein reductase). The protein is Cytochrome P450 4F3 of Mus musculus (Mouse).